The chain runs to 248 residues: tRNA (guanine-N(1)-)-methyltransferase (248 aa).

S-adenosyl-L-methionine is bound by residues Gly-113 and 133–138 (IGDYVL).

This sequence belongs to the RNA methyltransferase TrmD family. In terms of assembly, homodimer.

It is found in the cytoplasm. The enzyme catalyses guanosine(37) in tRNA + S-adenosyl-L-methionine = N(1)-methylguanosine(37) in tRNA + S-adenosyl-L-homocysteine + H(+). In terms of biological role, specifically methylates guanosine-37 in various tRNAs. This Shewanella woodyi (strain ATCC 51908 / MS32) protein is tRNA (guanine-N(1)-)-methyltransferase.